A 230-amino-acid polypeptide reads, in one-letter code: Ribonuclease 3 (230 aa).

The RNase III domain maps to 5–125 (YSRFYNILGY…VIGAIYLDSD (121 aa)). Glu-40 contributes to the Mg(2+) binding site. Residue Asp-44 is part of the active site. Residues Asp-111 and Glu-114 each coordinate Mg(2+). Residue Glu-114 is part of the active site. The DRBM domain maps to 153–223 (DSKSKLQEIL…AEKMIEMLSQ (71 aa)).

This sequence belongs to the ribonuclease III family. Homodimer. Mg(2+) is required as a cofactor.

Its subcellular location is the cytoplasm. The catalysed reaction is Endonucleolytic cleavage to 5'-phosphomonoester.. In terms of biological role, digests double-stranded RNA. Involved in the processing of primary rRNA transcript to yield the immediate precursors to the large and small rRNAs (23S and 16S). Processes some mRNAs, and tRNAs when they are encoded in the rRNA operon. Processes pre-crRNA and tracrRNA of type II CRISPR loci if present in the organism. This is Ribonuclease 3 from Francisella tularensis subsp. tularensis (strain WY96-3418).